A 374-amino-acid polypeptide reads, in one-letter code: Cell wall integrity and stress response component 1 (374 aa).

Residues 1–29 (MVFLNSSPFKGRLLFFVYLLIISTRLVAA) form the signal peptide. The Extracellular portion of the chain corresponds to 30-292 (DMNTQYGCYL…SNHTSLNAGA (263 aa)). A WSC domain is found at 31–119 (MNTQYGCYLV…DLYWSVYLTG (89 aa)). Positions 132–236 (VSSTTSSSSS…SSSSSSRPSS (105 aa)) are disordered. N-linked (GlcNAc...) asparagine glycans are attached at residues Asn278 and Asn284. A helical membrane pass occupies residues 293 to 313 (IVGIVIGCVAFAVVMALCIFL). Residues 314–374 (YFYFRRFKIR…RKILRVTNLN (61 aa)) are Cytoplasmic-facing. Position 354 is a phosphoserine (Ser354).

Post-translationally, O-mannosylated.

It is found in the membrane. The sequence is that of Cell wall integrity and stress response component 1 (wsc1) from Schizosaccharomyces pombe (strain 972 / ATCC 24843) (Fission yeast).